Consider the following 293-residue polypeptide: Prohibitin-2 (293 aa).

A helical; Signal-anchor for type II membrane protein transmembrane segment spans residues 21–41 (FGGGFGLLALGGVGLLALSSL). A coiled-coil region spans residues 190–235 (GREYAAAIEAKQVAQQEAERARFLVEKALQDKRSIIVKAEGEAQSA).

Belongs to the prohibitin family. As to quaternary structure, the mitochondrial prohibitin complex consists of two subunits (PHB1 and PHB2), assembled into a membrane-associated ring-shaped supercomplex of approximately 1 mDa.

Its subcellular location is the mitochondrion inner membrane. The protein resides in the cytoplasm. It is found in the nucleus. It localises to the cell membrane. Functionally, protein with pleiotropic attributes mediated in a cell-compartment- and tissue-specific manner, which include the plasma membrane-associated cell signaling functions, mitochondrial chaperone, and transcriptional co-regulator of transcription factors and sex steroid hormones in the nucleus. Its function is as follows. In the mitochondria, together with PHB, forms large ring complexes (prohibitin complexes) in the inner mitochondrial membrane (IMM) and functions as a chaperone protein that stabilizes mitochondrial respiratory enzymes and maintains mitochondrial integrity in the IMM, which is required for mitochondrial morphogenesis, neuronal survival, and normal lifespan. In the nucleus, serves as transcriptional co-regulator. The polypeptide is Prohibitin-2 (phbB) (Dictyostelium discoideum (Social amoeba)).